The following is a 94-amino-acid chain: uncharacterized protein (94 aa).

The chain crosses the membrane as a helical span at residues 13-33 (IVICLTTIISVTIFYILVSFF).

It is found in the membrane. This is an uncharacterized protein from Dictyostelium discoideum (Social amoeba).